A 373-amino-acid chain; its full sequence is Alanine dehydrogenase (373 aa).

Arg-15 and Lys-74 together coordinate substrate. Residue His-95 is the Proton donor/acceptor of the active site. Residues Ser-133, 177–178 (QA), Asp-197, Ser-219, 238–239 (VL), 266–269 (IAID), and 298–301 (VANM) contribute to the NAD(+) site. The active-site Proton donor/acceptor is the Asp-269.

This sequence belongs to the AlaDH/PNT family. Homohexamer. Trimer of dimer.

It catalyses the reaction L-alanine + NAD(+) + H2O = pyruvate + NH4(+) + NADH + H(+). The protein operates within amino-acid degradation; L-alanine degradation via dehydrogenase pathway; NH(3) and pyruvate from L-alanine: step 1/1. Functionally, catalyzes the reversible reductive amination of pyruvate to L-alanine. May play a role in cell wall synthesis as L-alanine is an important constituent of the peptidoglycan layer. In Staphylococcus haemolyticus (strain JCSC1435), this protein is Alanine dehydrogenase (ald).